Consider the following 122-residue polypeptide: Large ribosomal subunit protein uL14 (122 aa).

The protein belongs to the universal ribosomal protein uL14 family. Part of the 50S ribosomal subunit. Forms a cluster with proteins L3 and L19. In the 70S ribosome, L14 and L19 interact and together make contacts with the 16S rRNA in bridges B5 and B8.

Functionally, binds to 23S rRNA. Forms part of two intersubunit bridges in the 70S ribosome. The sequence is that of Large ribosomal subunit protein uL14 from Elusimicrobium minutum (strain Pei191).